The chain runs to 709 residues: MNIRSNPDTTLPAVTTGPLPSSRKIFATPDEAPELRVPLREIILSDGAGEPNLPVYDTTGPYTDPSVTIDVNAGLSRIRTAWVKERGGVEEYQGRDVKPEDNGNVGAAHAAKSFTAYHKPLRGLDAPAAGTANSPPPRGEGSGVGGATNTVPSSTPLPTPPPQGGREQGIAYACGPHLPPMVTQLEFARAGIITKEMIYVATRENLGRKQQLARAEAALADGESFGASVPAFVTPEFVRSEIARGRAIIPANINHGELEPMIIGRNFLTKINANIGNSAVTSSVEEEVDKMVWAIRWGADTVMDLSTGRNIHTTREWILRNAPIPIGTVPIYQALEKCEGDPVKLTWELYRDTLVEQCEQGVDYFTIHAGVRLAYIHLTANRTTGIVSRGGSIMAKWCLAHHQESFLYTHFDEICDLMRKYDVSFSLGDGLRPGSIADANDRAQFAELETLGELTKIAWDKGCQVMIEGPGHVPLHKIKINMDKQLKECGEAPFYTLGPLTTDIAPGYDHITSGIGAAMIGWFGCAMLCYVTPKEHLGLPDRNDVKVGVITYKIAAHASDLAKGHPAAQLRDDALSRARFDFRWQDQFNLGLDPDTAQAFHDETLPKDAHKVAHFCSMCGPKFCSMKITQDVRDYAAGLGDNEKAALNLAGGSSLGSVGMSISGKLEDGLPADAFAKAGMAEMSEKFRTMGEQLYLDAEKVKESNKALS.

Residues 1–13 (MNIRSNPDTTLPA) are compositionally biased toward polar residues. Disordered regions lie at residues 1-21 (MNIR…PLPS) and 125-168 (DAPA…GREQ). Substrate-binding positions include N274, M303, Y332, H368, 388–390 (SRG), 429–432 (DGLR), and E468. Zn(2+) is bound at residue H472. Y495 provides a ligand contact to substrate. H536 contacts Zn(2+). [4Fe-4S] cluster is bound by residues C616, C619, and C624.

The protein belongs to the ThiC family. Homodimer. It depends on [4Fe-4S] cluster as a cofactor.

The catalysed reaction is 5-amino-1-(5-phospho-beta-D-ribosyl)imidazole + S-adenosyl-L-methionine = 4-amino-2-methyl-5-(phosphooxymethyl)pyrimidine + CO + 5'-deoxyadenosine + formate + L-methionine + 3 H(+). Its pathway is cofactor biosynthesis; thiamine diphosphate biosynthesis. In terms of biological role, catalyzes the synthesis of the hydroxymethylpyrimidine phosphate (HMP-P) moiety of thiamine from aminoimidazole ribotide (AIR) in a radical S-adenosyl-L-methionine (SAM)-dependent reaction. This is Phosphomethylpyrimidine synthase from Rhodopseudomonas palustris (strain BisB18).